A 139-amino-acid chain; its full sequence is ATP synthase epsilon chain (139 aa).

This sequence belongs to the ATPase epsilon chain family. In terms of assembly, F-type ATPases have 2 components, CF(1) - the catalytic core - and CF(0) - the membrane proton channel. CF(1) has five subunits: alpha(3), beta(3), gamma(1), delta(1), epsilon(1). CF(0) has three main subunits: a, b and c.

It is found in the cell membrane. Functionally, produces ATP from ADP in the presence of a proton gradient across the membrane. This is ATP synthase epsilon chain from Roseiflexus sp. (strain RS-1).